The sequence spans 414 residues: tRNA(Ile)-lysidine synthase (414 aa).

Residue 13–18 (SGGIDS) coordinates ATP.

The protein belongs to the tRNA(Ile)-lysidine synthase family.

Its subcellular location is the cytoplasm. It carries out the reaction cytidine(34) in tRNA(Ile2) + L-lysine + ATP = lysidine(34) in tRNA(Ile2) + AMP + diphosphate + H(+). In terms of biological role, ligates lysine onto the cytidine present at position 34 of the AUA codon-specific tRNA(Ile) that contains the anticodon CAU, in an ATP-dependent manner. Cytidine is converted to lysidine, thus changing the amino acid specificity of the tRNA from methionine to isoleucine. In Thermotoga maritima (strain ATCC 43589 / DSM 3109 / JCM 10099 / NBRC 100826 / MSB8), this protein is tRNA(Ile)-lysidine synthase.